A 544-amino-acid chain; its full sequence is MGPGARLAALLVLLKLGVGDPAAAAGREDTFSALTSVARALAPERRLLGTLRRYLRGEEARLRDLTRFYDKVLSLHEDLKIPVVNPLLVFTLIKRLPSDWRNVVHSLEATENIRAPKDGYEKVEQDLPAFEDLEGAARALMRLQDAYMLNVKGLAQGVFQRVTGSSITDLYSPRQLFSLTADDCFQVGKVAYDTGDYYHAIPWLEEAVSLFRRSYGEWKTEDEASLEDALDYLAFACYQVGNVSCALSLSREFLVYSPDNKRMARNVLKYERLLAENGHLMAAETAIQRPNVPHLQTRDTYEGLCQTLGSQPTHYQIPSLYCSYETNSSPYLLLQPARKEVIHLRPLVALYHDFVSDEEAQKIRELAEPWLQRSVVASGEKQLQVEYRISKSAWLKDTVDPVLVTLDRRIAALTGLDIQPPYAEYLQVVNYGIGGHYEPHFDHATSPSSPLYKMKSGNRAATLMIYLSSVEAGGATAFIYGNFSVPVVKNAALFWWNLHRSGEGDDDTLHAGCPVLVGDKWVANKWIHEYGQEFRRPCDTNPED.

Positions 1–24 (MGPGARLAALLVLLKLGVGDPAAA) are cleaved as a signal peptide. One copy of the TPR repeat lies at 227-260 (EDALDYLAFACYQVGNVSCALSLSREFLVYSPDN). Residue asparagine 242 is glycosylated (N-linked (GlcNAc...) asparagine). The Fe2OG dioxygenase domain occupies 422 to 529 (YAEYLQVVNY…KWVANKWIHE (108 aa)). The Fe cation site is built by histidine 440 and aspartate 442. Asparagine 482 is a glycosylation site (N-linked (GlcNAc...) asparagine). Position 510 (histidine 510) interacts with Fe cation. 2-oxoglutarate is bound at residue lysine 520.

This sequence belongs to the P4HA family. As to quaternary structure, heterotetramer of two alpha-3 chains and two beta chains (the beta chain is the multi-functional PDI). Fe(2+) serves as cofactor. Requires L-ascorbate as cofactor. In terms of processing, N-glycosylation plays no role in the catalytic activity.

Its subcellular location is the endoplasmic reticulum lumen. It catalyses the reaction L-prolyl-[collagen] + 2-oxoglutarate + O2 = trans-4-hydroxy-L-prolyl-[collagen] + succinate + CO2. Functionally, catalyzes the post-translational formation of 4-hydroxyproline in -Xaa-Pro-Gly- sequences in collagens and other proteins. This is Prolyl 4-hydroxylase subunit alpha-3 (P4ha3) from Rattus norvegicus (Rat).